The following is a 1069-amino-acid chain: MPLNKDIKKVLVVGSGPIVIGQAAEFDYSGTQACEALKSEGIEVVLINSNPATIMTDKEVADKVYLEPLTLEFIEKVIVKERPDSLLAGMGGQTGLNLAVELHDSGILEKYDVKVIGTSIESIKEGEDRELFRDMMNRIGEPVIKSEIVTDLQSGIDFANKIGYPVIVRPAYTLGGSGGGIADDEEELRIILESGLQLSTIGQVLLEKSVKGWKEIEYEVMRDSYGNCITVCNMENIDPVGIHTGDSIVVAPSQTLSDKEYQMLRTASINIINSVGIEGGCNVQFSLNPNTFEYAVIEINPRVSRSSALASKATGYPIAKLAAKIALGYGLDEIKNAVTQKTYACFEPTLDYVVVKIPKWPFDKFFGADRQLGTKMMATGEIMAIGANFEQAFLKGIRSLEIGKYSLDHKKFKEHSMSELKDLVMKPDDERIFALAEMLRRDYMIERINKITGIDKFFLEKIKWIVEEEQRLKLSKIEDLDKEWLQNLKKKGFSDKAIADMLKVSPEDIYRLRDIWSIKPSYKMVDTCGGEFEALSPYYYSTYEQYDEVEVSNRRKVIVIGSGPIRIGQGIEFDYASVHCVKALKKLDIETIIVNNNPETVSTDFDISDKLYFEPLTEEDVLNIIEKENPYGVILQFGGQTAIKLANFLKEKNIKTLGTTADQIDMAEDREKFDELLERLDISRPKGKGIWSVEEGLEEAERLGFPVLVRPSYVIGGQGMEITHDEEELIFYLTNAFVKDKKNPILIDKYLMGREIEVDAISDGENILIPGIMEHLERAGVHSGDSVTMYPSQNVCDEIKGKILEYTKKLALAIGIKGMINIQFIEFEGNLYVIEVNPRASRTVPYISKVSKVPIVDIATQVMMGAKLNDLGYGVDIYKEPELVSVKVPVFSTQKLPNVEVCLGPEMRSTGEVLGVGRNLKEALYKGFVGANMYPSKEKGKILATINKHNKAEFLPIAKDLAKVGYKFIATTGTCKLLREEGIDAEEVRKIDEEKPNILDIVKNREVDLVVNTPTKGNDSKRDGFLIRRAAVERNLGVITALDTLRAIADVELEEFDKNKDLEVFDITK.

Residues 1–401 (MPLNKDIKKV…AFLKGIRSLE (401 aa)) are carboxyphosphate synthetic domain. Positions 129, 169, 175, 176, 208, 210, 215, 241, 242, 243, 284, and 298 each coordinate ATP. The region spanning 133-327 (RDMMNRIGEP…IAKLAAKIAL (195 aa)) is the ATP-grasp 1 domain. Residues Gln-284, Glu-298, and Asn-300 each coordinate Mg(2+). Residues Gln-284, Glu-298, and Asn-300 each coordinate Mn(2+). An oligomerization domain region spans residues 402-549 (IGKYSLDHKK…YSTYEQYDEV (148 aa)). Residues 550–932 (EVSNRRKVIV…ALYKGFVGAN (383 aa)) form a carbamoyl phosphate synthetic domain region. One can recognise an ATP-grasp 2 domain in the interval 674-864 (DELLERLDIS…IVDIATQVMM (191 aa)). Residues Arg-710, Lys-749, Leu-751, Glu-755, Gly-780, Val-781, His-782, Ser-783, Gln-823, and Glu-835 each contribute to the ATP site. Residues Gln-823, Glu-835, and Asn-837 each contribute to the Mg(2+) site. Gln-823, Glu-835, and Asn-837 together coordinate Mn(2+). In terms of domain architecture, MGS-like spans 932–1069 (NMYPSKEKGK…KDLEVFDITK (138 aa)). The allosteric domain stretch occupies residues 933–1069 (MYPSKEKGKI…KDLEVFDITK (137 aa)).

It belongs to the CarB family. Composed of two chains; the small (or glutamine) chain promotes the hydrolysis of glutamine to ammonia, which is used by the large (or ammonia) chain to synthesize carbamoyl phosphate. Tetramer of heterodimers (alpha,beta)4. Requires Mg(2+) as cofactor. Mn(2+) serves as cofactor.

It catalyses the reaction hydrogencarbonate + L-glutamine + 2 ATP + H2O = carbamoyl phosphate + L-glutamate + 2 ADP + phosphate + 2 H(+). It carries out the reaction hydrogencarbonate + NH4(+) + 2 ATP = carbamoyl phosphate + 2 ADP + phosphate + 2 H(+). It participates in amino-acid biosynthesis; L-arginine biosynthesis; carbamoyl phosphate from bicarbonate: step 1/1. The protein operates within pyrimidine metabolism; UMP biosynthesis via de novo pathway; (S)-dihydroorotate from bicarbonate: step 1/3. Large subunit of the glutamine-dependent carbamoyl phosphate synthetase (CPSase). CPSase catalyzes the formation of carbamoyl phosphate from the ammonia moiety of glutamine, carbonate, and phosphate donated by ATP, constituting the first step of 2 biosynthetic pathways, one leading to arginine and/or urea and the other to pyrimidine nucleotides. The large subunit (synthetase) binds the substrates ammonia (free or transferred from glutamine from the small subunit), hydrogencarbonate and ATP and carries out an ATP-coupled ligase reaction, activating hydrogencarbonate by forming carboxy phosphate which reacts with ammonia to form carbamoyl phosphate. The sequence is that of Carbamoyl phosphate synthase large chain from Clostridium botulinum (strain Eklund 17B / Type B).